A 571-amino-acid chain; its full sequence is UvrABC system protein C (571 aa).

The GIY-YIG domain occupies 15–93; sequence TSPGVYLWKD…VDRFNPEFNI (79 aa). The UVR domain maps to 184–219; sequence NNYLNELTNKMHTAANNMQFELALFLRDGLTYLKKL.

It belongs to the UvrC family. In terms of assembly, interacts with UvrB in an incision complex.

The protein localises to the cytoplasm. In terms of biological role, the UvrABC repair system catalyzes the recognition and processing of DNA lesions. UvrC both incises the 5' and 3' sides of the lesion. The N-terminal half is responsible for the 3' incision and the C-terminal half is responsible for the 5' incision. This chain is UvrABC system protein C, found in Mycoplasmopsis agalactiae (strain NCTC 10123 / CIP 59.7 / PG2) (Mycoplasma agalactiae).